Reading from the N-terminus, the 450-residue chain is SAGA complex/transcription factor TFIID complex subunit Taf12 (450 aa).

3 stretches are compositionally biased toward polar residues: residues 1 to 10, 19 to 29, and 190 to 212; these read MNGQHSSPGT, PVNQAQFSQQR, and QNRQ…NAST. 2 disordered regions span residues 1–29 and 190–281; these read MNGQ…SQQR and QNRQ…VEKS. Positions 217–236 are enriched in low complexity; the sequence is STASTPQLQQTQAQANAPQQ. 2 stretches are compositionally biased toward polar residues: residues 237–246 and 255–281; these read RINPETSSVP and ANVS…VEKS. Position 297 is a phosphoserine (Ser297). Positions 338-413 constitute a Histone-fold domain; it reads NGNRLLSKRK…HLERNWNIRL (76 aa). The disordered stretch occupies residues 426 to 450; the sequence is RKTGPTPSYQQKQNAIGTAKSLNKD. A compositionally biased stretch (polar residues) spans 430-441; it reads PTPSYQQKQNAI.

Belongs to the TAF12 family. In terms of assembly, component of the 1.8 MDa SAGA (Spt-Ada-Gcn5 acetyltransferase) complex, which is composed of 19 subunits tra1, spt7, taf5, ngg1/ada3, sgf73, spt20, spt8, taf12, taf6, hfi1/ada1, ubp8, gcn5, ada2, spt3, sgf29, taf10, taf9, sgf11 and sus1. The SAGA complex is composed of 4 modules, namely the HAT (histone acetyltransferase) module (gcn5, ada2, ngg1/ada3 and sgf29), the DUB (deubiquitinating) module (ubp8, sgf11, sgf73 and sus1), the core or TAF (TBP-associated factor) module (taf5, taf6, taf9, taf10 and taf12), and the Tra1 or SPT (Suppressor of Ty) module (tra1, hfi1/ada1, spt3, spt7, spt8 and spt20). The Tra1/SPT module binds activators, the core module recruits TBP (TATA-binding protein), the HAT module contains the histone H3 acetyltransferase gcn5, and the DUB module comprises the histone H2B deubiquitinase ubp8. Component of the 1.2 MDa TFIID complex, which is composed of TATA-binding protein (TBP) and the 14 TBP-associated factors (TAFs). It comprises 1 copy of each taf1, taf2, taf3, taf7, taf8, taf11, taf13, 2 copies of each taf4, taf5, taf6, taf9, taf10, taf12, and 3 copies of taf14. In TFIID, taf12 heterodimerizes with taf4, forming ultimately an octamer consisting of a taf6-taf9 heterotetramer core flanked by taf4-taf12 dimers on either side, similar to the histone H2A-H2B-H3-H4 octamer.

The protein resides in the nucleus. In terms of biological role, functions as a component of both the DNA-binding general transcription initiation factor complex TFIID and the transcription coactivator SAGA complex. Binding of TFIID to a promoter (with or without TATA element) is the initial step in pre-initiation complex (PIC) formation. TFIID plays a key role in the regulation of gene expression by RNA polymerase II through different activities such as transcription activator interaction, core promoter recognition and selectivity, TFIIA and TFIIB interaction, chromatin modification (histone acetylation by TAF1), facilitation of DNA opening and initiation of transcription. SAGA acts as a general cofactor required for essentially all RNA polymerase II transcription. At the promoters, SAGA is required for transcription pre-initiation complex (PIC) recruitment. It influences RNA polymerase II transcriptional activity through different activities such as TBP interaction (via core/TAF module) and promoter selectivity, interaction with transcription activators (via Tra1/SPT module), and chromatin modification through histone acetylation (via HAT module) and deubiquitination (via DUB module). SAGA preferentially acetylates histones H3 (to form H3K9ac, H3K14ac, H3K18ac and H3K23ac) and H2B and deubiquitinates histone H2B. SAGA interacts with DNA via upstream activating sequences (UASs). This is SAGA complex/transcription factor TFIID complex subunit Taf12 from Schizosaccharomyces pombe (strain 972 / ATCC 24843) (Fission yeast).